The primary structure comprises 179 residues: Large ribosomal subunit protein uL5 (179 aa).

Belongs to the universal ribosomal protein uL5 family. In terms of assembly, part of the 50S ribosomal subunit; part of the 5S rRNA/L5/L18/L25 subcomplex. Contacts the 5S rRNA and the P site tRNA. Forms a bridge to the 30S subunit in the 70S ribosome.

This is one of the proteins that bind and probably mediate the attachment of the 5S RNA into the large ribosomal subunit, where it forms part of the central protuberance. In the 70S ribosome it contacts protein S13 of the 30S subunit (bridge B1b), connecting the 2 subunits; this bridge is implicated in subunit movement. Contacts the P site tRNA; the 5S rRNA and some of its associated proteins might help stabilize positioning of ribosome-bound tRNAs. The sequence is that of Large ribosomal subunit protein uL5 from Methylococcus capsulatus (strain ATCC 33009 / NCIMB 11132 / Bath).